The primary structure comprises 277 residues: Nickel import ATP-binding protein NikE (277 aa).

In terms of domain architecture, ABC transporter spans 14 to 253 (YRTVSLVGRS…EHPASRALQR (240 aa)). Residue 46–53 (GRSGSGKS) participates in ATP binding.

The protein belongs to the ABC transporter superfamily. Nickel importer (TC 3.A.1.5.3) family. The complex is composed of two ATP-binding proteins (NikD and NikE), two transmembrane proteins (NikB and NikC) and a solute-binding protein (NikA).

The protein localises to the cell inner membrane. The enzyme catalyses Ni(2+)(out) + ATP + H2O = Ni(2+)(in) + ADP + phosphate + H(+). In terms of biological role, part of the ABC transporter complex NikABCDE involved in nickel import. Responsible for energy coupling to the transport system. In Rhodospirillum rubrum (strain ATCC 11170 / ATH 1.1.1 / DSM 467 / LMG 4362 / NCIMB 8255 / S1), this protein is Nickel import ATP-binding protein NikE.